A 517-amino-acid polypeptide reads, in one-letter code: Gamma-1-syntrophin (517 aa).

In terms of domain architecture, PDZ spans 57-140 (TVTIRRQTVG…EVTLTVSFLK (84 aa)). Residues 283–390 (QIVYMGWCEA…WERAFQTATF (108 aa)) form the PH domain.

The protein belongs to the syntrophin family. In terms of assembly, isoform 1, but not isoform 2, interacts with the dystrophin protein DMD and related proteins DTNA and DTNB. Interacts with DGKZ. In terms of tissue distribution, brain specific. In CNS, it is expressed in the perikaryon and proximal portion of the neuronal processes. Strong expression in the hippocampus, neuron-rich dendate granule cells, and pyramidal cell layers. Highly expressed in neurons of the cerebral cortex. Also expressed in the cerebellar cortex, deep cerebellar nuclei, thalamus, and basal ganglia. No expression in muscle cells.

It localises to the cytoplasm. Its subcellular location is the cytoskeleton. The protein localises to the nucleus. Its function is as follows. Adapter protein that binds to and probably organizes the subcellular localization of a variety of proteins. May link various receptors to the actin cytoskeleton and the dystrophin glycoprotein complex. May participate in regulating the subcellular location of diacylglycerol kinase-zeta to ensure that diacylglycerol is rapidly inactivated following receptor activation. This chain is Gamma-1-syntrophin (SNTG1), found in Homo sapiens (Human).